The chain runs to 243 residues: Small ribosomal subunit protein uS3 (243 aa).

Ala-2 carries the N-acetylalanine modification. Ser-6 carries the phosphoserine; by PKC/PRKCD modification. The 72-residue stretch at 21–92 (LNEFLTRELA…SVELYAEKVA (72 aa)) folds into the KH type-2 domain. At Ser-35 the chain carries Phosphoserine. Phosphothreonine; by MAPK is present on Thr-42. Residue Lys-62 is modified to N6-acetyllysine. Residues Arg-64, Arg-65, and Arg-67 each carry the asymmetric dimethylarginine; by PRMT1 modification. Thr-70 carries the post-translational modification Phosphothreonine; by PKB. Residue Lys-90 forms a Glycyl lysine isopeptide (Lys-Gly) (interchain with G-Cter in ubiquitin) linkage. The residue at position 104 (Ser-104) is a Phosphoserine. Lys-132 bears the N6-succinyllysine mark. Residue Lys-202 forms a Glycyl lysine isopeptide (Lys-Gly) (interchain with G-Cter in ubiquitin) linkage. Position 209 is a phosphoserine; by IKKB (Ser-209). Lys-214 participates in a covalent cross-link: Glycyl lysine isopeptide (Lys-Gly) (interchain with G-Cter in SUMO2); alternate. Lys-214 is covalently cross-linked (Glycyl lysine isopeptide (Lys-Gly) (interchain with G-Cter in ubiquitin); alternate). The tract at residues 214-243 (KDEILPTTPISEQKGGKPEPPAMPQPVPTA) is disordered. A Phosphothreonine modification is found at Thr-220. Position 221 is a phosphothreonine; by CDK1 and PKC/PRKCD (Thr-221). Phosphoserine is present on Ser-224. A Glycyl lysine isopeptide (Lys-Gly) (interchain with G-Cter in SUMO2) cross-link involves residue Lys-230. Residues 231–243 (PEPPAMPQPVPTA) show a composition bias toward pro residues. Thr-242 is modified (phosphothreonine).

The protein belongs to the universal ribosomal protein uS3 family. In terms of assembly, component of the 40S small ribosomal subunit. Identified in a IGF2BP1-dependent mRNP granule complex containing untranslated mRNAs. Interacts with HNRPD. Interacts with PRMT1; the interaction methylates RPS3. Interacts with SUMO1; the interaction sumoylates RPS3. Interacts with UBC9. Interacts with CDK1; the interaction phosphorylates RPS3. Interacts with PRKCD; the interaction phosphorylates RPS3. Interacts with PKB/AKT; the interaction phosphorylates RPS3. Interacts with E2F1; the interaction occurs in the absence of nerve growth factor and increases transcription of pro-apoptotic proteins BCL2L11/BIM and HRK/Dp5. Interacts with the base excision repair proteins APEX1 and OGG1; interaction with OGG1 increases OGG1 N-glycosylase activity. Interacts with UNG; the interaction increases the uracil excision activity of UNG1. Interacts with HSP90; the interaction prevents the ubiquitination and proteasome-dependent degradation of RPS3 and is suppressed by increased ROS levels. Interacts with TOM70; the interaction promotes translocation of RPS3 to the mitochondrion. Interacts (via N-terminus) with RELA (via N-terminus); the interaction enhances the DNA-binding activity of the NF-kappa-B p65-p50 complex. Interacts with NFKBIA; the interaction is direct and may bridge the interaction between RPS3 and RELA. Interacts with IKKB; the interaction phosphorylates RPS3 and enhances its translocation to the nucleus. Interacts (via KH domain) with MDM2 and TP53. Interacts with TRADD. Interacts with CRY1. Post-translationally, methylation by PRMT1 is required for import into the nucleolus and for ribosome assembly. Sumoylation by SUMO1 enhances protein stability through increased resistance to proteolysis. Sumoylation occurs at one or more of the three consensus sites, Lys-18, Lys-214 and Lys-230. In terms of processing, phosphorylation at Thr-221 by CDK1 occurs mainly in G2/M phase. Phosphorylation by PRKCD occurs on a non-ribosomal-associated form which results in translocation of RPS3 to the nucleus and enhances its endonuclease activity. Phosphorylated on Ser-209 by IKKB in response to activation of the NF-kappa-B p65-p50 complex which enhances the association of RPS3 with importin-alpha and mediates the nuclear translocation of RPS3. Phosphorylation by MAPK is required for translocation to the nucleus following exposure of cells to DNA damaging agents such as hydrogen peroxide. Phosphorylation by PKB/AKT mediates RPS3 nuclear translocation, enhances RPS3 endonuclease activity and suppresses RPS3-induced neuronal apoptosis. Post-translationally, ubiquitinated; ubiquitination is prevented by interaction with HSP90 which stabilizes the protein. Monoubiquitinated at Lys-214 by RNF10 and ZNF598 when a ribosome has stalled during translation of poly(A) sequences, leading to preclude synthesis of a long poly-lysine tail and initiate the ribosome quality control (RQC) pathway to degrade the potentially detrimental aberrant nascent polypeptide. Deubiquitinated at Lys-214 by USP10, preventing degradation by the proteasome and promoting 40S ribosome subunit recycling following ribosome dissociation. Ufmylated by UFL1.

The protein resides in the cytoplasm. It is found in the nucleus. The protein localises to the nucleolus. It localises to the mitochondrion inner membrane. Its subcellular location is the cytoskeleton. The protein resides in the spindle. The enzyme catalyses 2'-deoxyribonucleotide-(2'-deoxyribose 5'-phosphate)-2'-deoxyribonucleotide-DNA = a 3'-end 2'-deoxyribonucleotide-(2,3-dehydro-2,3-deoxyribose 5'-phosphate)-DNA + a 5'-end 5'-phospho-2'-deoxyribonucleoside-DNA + H(+). Component of the small ribosomal subunit. The ribosome is a large ribonucleoprotein complex responsible for the synthesis of proteins in the cell. Has endonuclease activity and plays a role in repair of damaged DNA. Cleaves phosphodiester bonds of DNAs containing altered bases with broad specificity and cleaves supercoiled DNA more efficiently than relaxed DNA. Displays high binding affinity for 7,8-dihydro-8-oxoguanine (8-oxoG), a common DNA lesion caused by reactive oxygen species (ROS). Has also been shown to bind with similar affinity to intact and damaged DNA. Stimulates the N-glycosylase activity of the base excision protein OGG1. Enhances the uracil excision activity of UNG1. Also stimulates the cleavage of the phosphodiester backbone by APEX1. When located in the mitochondrion, reduces cellular ROS levels and mitochondrial DNA damage. Has also been shown to negatively regulate DNA repair in cells exposed to hydrogen peroxide. Plays a role in regulating transcription as part of the NF-kappa-B p65-p50 complex where it binds to the RELA/p65 subunit, enhances binding of the complex to DNA and promotes transcription of target genes. Represses its own translation by binding to its cognate mRNA. Binds to and protects TP53/p53 from MDM2-mediated ubiquitination. Involved in spindle formation and chromosome movement during mitosis by regulating microtubule polymerization. Involved in induction of apoptosis through its role in activation of CASP8. Induces neuronal apoptosis by interacting with the E2F1 transcription factor and acting synergistically with it to up-regulate pro-apoptotic proteins BCL2L11/BIM and HRK/Dp5. Interacts with TRADD following exposure to UV radiation and induces apoptosis by caspase-dependent JNK activation. The sequence is that of Small ribosomal subunit protein uS3 (RPS3) from Bos taurus (Bovine).